Reading from the N-terminus, the 258-residue chain is Chaperone protein caf1M (258 aa).

An N-terminal signal peptide occupies residues 1 to 20 (MILNRLSTLGIITFGMLSFA). Cysteines 121 and 160 form a disulfide.

The protein belongs to the periplasmic pilus chaperone family.

Its subcellular location is the periplasm. In terms of biological role, has a stimulatory role for the envelope antigen F1 secretion. It seems to interact with the subunit polypeptide and to prevent it from digestion by a protease. The polypeptide is Chaperone protein caf1M (caf1M) (Yersinia pestis).